Reading from the N-terminus, the 476-residue chain is Calcium/calmodulin-dependent protein kinase type 1G (476 aa).

The Protein kinase domain occupies Phe23–Ile277. Residues Leu29–Val37 and Lys52 each bind ATP. Asp143 (proton acceptor) is an active-site residue. The autoinhibitory domain stretch occupies residues Ile277–Met317. Residues Lys297–Arg318 are calmodulin-binding. The disordered stretch occupies residues His325 to Glu352. Over residues Pro338 to Glu352 the composition is skewed to polar residues.

Belongs to the protein kinase superfamily. CAMK Ser/Thr protein kinase family. CaMK subfamily. Post-translationally, may be prenylated on Cys-473. Mainly expressed in brain with small amounts in skeletal muscles, kidney, spleen and liver. Strongly expressed in forebrain neocortex, striatum and limbic system.

It localises to the cytoplasm. It is found in the golgi apparatus membrane. The protein resides in the cell membrane. It carries out the reaction L-seryl-[protein] + ATP = O-phospho-L-seryl-[protein] + ADP + H(+). It catalyses the reaction L-threonyl-[protein] + ATP = O-phospho-L-threonyl-[protein] + ADP + H(+). With respect to regulation, activated by Ca(2+)/calmodulin. Binding of calmodulin is thought to result in a conformational change and leads to activation through phosphorylation by CAMKK1. Functionally, calcium/calmodulin-dependent protein kinase belonging to a proposed calcium-triggered signaling cascade. In vitro phosphorylates transcription factor CREB1. This Homo sapiens (Human) protein is Calcium/calmodulin-dependent protein kinase type 1G (CAMK1G).